Consider the following 211-residue polypeptide: Protein-methionine-sulfoxide reductase heme-binding subunit MsrQ (211 aa).

A run of 4 helical transmembrane segments spans residues 10-30 (WLKV…VWAI), 82-102 (LWCF…ELGV), 116-136 (PYLT…FTST), and 153-173 (FVYL…KIIS).

The protein belongs to the MsrQ family. Heterodimer of a catalytic subunit (MsrP) and a heme-binding subunit (MsrQ). FMN is required as a cofactor. The cofactor is heme b.

Its subcellular location is the cell inner membrane. Its function is as follows. Part of the MsrPQ system that repairs oxidized periplasmic proteins containing methionine sulfoxide residues (Met-O), using respiratory chain electrons. Thus protects these proteins from oxidative-stress damage caused by reactive species of oxygen and chlorine generated by the host defense mechanisms. MsrPQ is essential for the maintenance of envelope integrity under bleach stress, rescuing a wide series of structurally unrelated periplasmic proteins from methionine oxidation, including the primary periplasmic chaperone SurA and the lipoprotein Pal. MsrQ provides electrons for reduction to the reductase catalytic subunit MsrP, using the quinone pool of the respiratory chain. In Shigella dysenteriae serotype 1 (strain Sd197), this protein is Protein-methionine-sulfoxide reductase heme-binding subunit MsrQ.